The chain runs to 647 residues: Nucleoside triphosphatase I (647 aa).

The Helicase ATP-binding domain occupies 48-213; the sequence is FIGLSELNSL…KYLINLLRPK (166 aa). Residue 61 to 68 participates in ATP binding; sequence WDTGYGKT. The DEXH box signature appears at 150-153; the sequence is DEVH. Positions 377 to 540 constitute a Helicase C-terminal domain; that stretch reads YIEACKIILN…KINVLNSFMK (164 aa). The tract at residues 466–532 is binding to the cap-specific mRNA (nucleoside-2'-O-)-methyltransferase; sequence DIIILDLPWK…DLIKSKQDKI (67 aa).

The protein belongs to the helicase family. NPH I subfamily. Monomer. Interacts (via C-terminus) with RAP94 (via N-terminus). Interacts with the cap-specific mRNA (nucleoside-2'-O-)-methyltransferase.

The protein resides in the virion. The enzyme catalyses a ribonucleoside 5'-triphosphate + H2O = a ribonucleoside 5'-diphosphate + phosphate + H(+). DNA-dependent ATPase required for providing the needed energy to achieve the termination of early transcripts. Acts in concert with the RAP94 subunit of the virion RNA polymerase and the capping enzyme/VTF to catalyze release of UUUUUNU-containing nascent RNA from the elongation complex. NPH-I must bind ssDNA in order to exhibit ATPase activity. The polypeptide is Nucleoside triphosphatase I (NPH1) (Melanoplus sanguinipes entomopoxvirus (MsEPV)).